The chain runs to 234 residues: Sugar fermentation stimulation protein homolog (234 aa).

Belongs to the SfsA family.

The chain is Sugar fermentation stimulation protein homolog from Shewanella piezotolerans (strain WP3 / JCM 13877).